A 447-amino-acid chain; its full sequence is Argininosuccinate synthase (447 aa).

Residues 17–25 (AFSGGLDTS) and Ala-43 each bind ATP. Position 99 (Tyr-99) interacts with L-citrulline. Positions 129 and 131 each coordinate ATP. Positions 131, 135, and 136 each coordinate L-aspartate. Residue Asn-135 participates in L-citrulline binding. ATP is bound at residue Asp-136. L-citrulline-binding residues include Arg-139 and Ser-192. ATP is bound at residue Asp-194. 3 residues coordinate L-citrulline: Thr-201, Glu-203, and Glu-280.

Belongs to the argininosuccinate synthase family. Type 2 subfamily. Homotetramer.

It is found in the cytoplasm. The catalysed reaction is L-citrulline + L-aspartate + ATP = 2-(N(omega)-L-arginino)succinate + AMP + diphosphate + H(+). It participates in amino-acid biosynthesis; L-arginine biosynthesis; L-arginine from L-ornithine and carbamoyl phosphate: step 2/3. The protein is Argininosuccinate synthase of Salmonella newport (strain SL254).